We begin with the raw amino-acid sequence, 179 residues long: Large ribosomal subunit protein uL5 (179 aa).

Lys3 carries the N6-acetyllysine modification.

It belongs to the universal ribosomal protein uL5 family. Part of the 50S ribosomal subunit; part of the 5S rRNA/L5/L18/L25 subcomplex. Contacts the 5S rRNA and the P site tRNA. Forms a bridge to the 30S subunit in the 70S ribosome.

Its function is as follows. This is one of the proteins that bind and probably mediate the attachment of the 5S RNA into the large ribosomal subunit, where it forms part of the central protuberance. In the 70S ribosome it contacts protein S13 of the 30S subunit (bridge B1b), connecting the 2 subunits; this bridge is implicated in subunit movement. Contacts the P site tRNA; the 5S rRNA and some of its associated proteins might help stabilize positioning of ribosome-bound tRNAs. In Shigella flexneri, this protein is Large ribosomal subunit protein uL5.